The chain runs to 146 residues: Putative pre-16S rRNA nuclease (146 aa).

This sequence belongs to the YqgF nuclease family.

The protein localises to the cytoplasm. Its function is as follows. Could be a nuclease involved in processing of the 5'-end of pre-16S rRNA. The polypeptide is Putative pre-16S rRNA nuclease (Dechloromonas aromatica (strain RCB)).